Consider the following 147-residue polypeptide: Zinc finger HIT domain-containing protein 3 (147 aa).

Cys3, Cys6, Cys14, Cys17, Cys22, Cys26, His30, and Cys34 together coordinate Zn(2+). An HIT-type zinc finger spans residues 3–34; the sequence is CVICLEKPKYRCPACRVPYCSVACFRKHKEQC. The disordered stretch occupies residues 45 to 67; sequence IRSALPTKTXKPVENKDDDDSIA. Ser72 is subject to Phosphoserine.

As to quaternary structure, thyroid receptor interacting proteins (TRIPs) specifically interact with the ligand binding domain of the thyroid receptor (TR). Requires the presence of thyroid hormone for its interaction. Interacts with NUFIP1. Interacts (via HIT-type zinc finger) with the RUVBL1/RUVBL2 complex in the presence of ADP.

It is found in the cytoplasm. Its subcellular location is the nucleus. This Macaca mulatta (Rhesus macaque) protein is Zinc finger HIT domain-containing protein 3 (ZNHIT3).